Reading from the N-terminus, the 299-residue chain is Apolipoprotein E (299 aa).

An N-terminal signal peptide occupies residues 1–18; it reads MKVLCTVLVVTLLAGCQA. The tract at residues 74 to 245 is 8 X 22 AA approximate tandem repeats; sequence VLMEDTMKAV…RLEEVREQME (172 aa). A run of 8 repeats spans residues 75-95, 96-117, 118-139, 140-161, 162-183, 184-206, 207-225, and 224-242. At Met137 the chain carries Methionine sulfoxide. Ser141 carries the post-translational modification Phosphoserine. The LDL and other lipoprotein receptors binding stretch occupies residues 152-162; sequence HLRKLRKKLLR. 156-159 provides a ligand contact to heparin; it reads LRKK. A lipid-binding and lipoprotein association region spans residues 205–273; the sequence is ALTSQPLQER…GWFEPMVEDM (69 aa). 219–226 contacts heparin; sequence GKRLRGRL. The tract at residues 261–273 is specificity for association with VLDL; it reads RLKGWFEPMVEDM.

It belongs to the apolipoprotein A1/A4/E family. Homotetramer. May interact with ABCA1; functionally associated with ABCA1 in the biogenesis of HDLs. May interact with APP/A4 amyloid-beta peptide; the interaction is extremely stable in vitro but its physiological significance is unclear. May interact with MAPT. May interact with MAP2. In the cerebrospinal fluid, interacts with secreted SORL1. Interacts with PMEL; this allows the loading of PMEL luminal fragment on ILVs to induce fibril nucleation. Post-translationally, APOE exists as multiple glycosylated and sialylated glycoforms within cells and in plasma. The extent of glycosylation and sialylation are tissue and context specific. In terms of processing, glycated in plasma VLDL. Phosphorylated by FAM20C in the extracellular medium.

The protein localises to the secreted. It is found in the extracellular space. The protein resides in the extracellular matrix. It localises to the extracellular vesicle. Its subcellular location is the endosome. The protein localises to the multivesicular body. Functionally, APOE is an apolipoprotein, a protein associating with lipid particles, that mainly functions in lipoprotein-mediated lipid transport between organs via the plasma and interstitial fluids. APOE is a core component of plasma lipoproteins and is involved in their production, conversion and clearance. Apolipoproteins are amphipathic molecules that interact both with lipids of the lipoprotein particle core and the aqueous environment of the plasma. As such, APOE associates with chylomicrons, chylomicron remnants, very low density lipoproteins (VLDL) and intermediate density lipoproteins (IDL) but shows a preferential binding to high-density lipoproteins (HDL). It also binds a wide range of cellular receptors including the LDL receptor/LDLR, the LDL receptor-related proteins LRP1, LRP2 and LRP8 and the very low-density lipoprotein receptor/VLDLR that mediate the cellular uptake of the APOE-containing lipoprotein particles. Finally, APOE also has a heparin-binding activity and binds heparan-sulfate proteoglycans on the surface of cells, a property that supports the capture and the receptor-mediated uptake of APOE-containing lipoproteins by cells. A main function of APOE is to mediate lipoprotein clearance through the uptake of chylomicrons, VLDLs, and HDLs by hepatocytes. APOE is also involved in the biosynthesis by the liver of VLDLs as well as their uptake by peripheral tissues ensuring the delivery of triglycerides and energy storage in muscle, heart and adipose tissues. By participating in the lipoprotein-mediated distribution of lipids among tissues, APOE plays a critical role in plasma and tissues lipid homeostasis. APOE is also involved in two steps of reverse cholesterol transport, the HDLs-mediated transport of cholesterol from peripheral tissues to the liver, and thereby plays an important role in cholesterol homeostasis. First, it is functionally associated with ABCA1 in the biogenesis of HDLs in tissues. Second, it is enriched in circulating HDLs and mediates their uptake by hepatocytes. APOE also plays an important role in lipid transport in the central nervous system, regulating neuron survival and sprouting. The protein is Apolipoprotein E (APOE) of Ctenomys sociabilis (Social tuco-tuco).